A 333-amino-acid chain; its full sequence is Glycogenin-1 (333 aa).

N-acetylthreonine is present on threonine 2. Residues leucine 9, threonine 11, asparagine 12, and tyrosine 15 each coordinate UDP. UDP-alpha-D-glucose is bound by residues leucine 9, threonine 11, asparagine 12, and tyrosine 15. Serine 44 carries the phosphoserine modification. Arginine 77 provides a ligand contact to UDP. Residues arginine 77, lysine 86, aspartate 102, alanine 103, aspartate 104, asparagine 133, serine 134, aspartate 160, aspartate 163, and glutamine 164 each contribute to the UDP-alpha-D-glucose site. Aspartate 102, alanine 103, and aspartate 104 together coordinate UDP. Aspartate 102 contacts Mn(2+). Aspartate 104 provides a ligand contact to Mn(2+). O-linked (Glc...) tyrosine glycosylation is present at tyrosine 195. Residues histidine 212, glycine 215, and lysine 218 each contribute to the UDP site. Position 212 (histidine 212) interacts with Mn(2+). 2 residues coordinate UDP-alpha-D-glucose: glycine 215 and lysine 218. The tract at residues 284-316 (SDLSFGEAPAAPQPSMSSEERKERWEQGQADYM) is interaction with GYS1. Residues 290 to 316 (EAPAAPQPSMSSEERKERWEQGQADYM) are disordered.

It belongs to the glycosyltransferase 8 family. Glycogenin subfamily. As to quaternary structure, part of the GYS1-GYG1 complex, a heterooctamer composed of a tetramer of GYS1 and 2 dimers of GYG1, where each GYS1 protomer binds to one GYG1 subunit (via GYG1 C-terminus); the GYS1 tetramer may dissociate from GYG1 dimers to continue glycogen polymerization on its own. May also form a heterooctamer complex with GYS2. It depends on Mn(2+) as a cofactor. Self-glycosylated by the transfer of glucose residues from UDP-glucose to itself, forming an alpha-1,4-glycan of around 10 residues attached to Tyr-195. In terms of processing, phosphorylated. In terms of tissue distribution, skeletal muscle, heart, to a lesser extent in kidney, lung and brain.

The protein resides in the cytoplasm. The protein localises to the nucleus. The enzyme catalyses L-tyrosyl-[glycogenin] + UDP-alpha-D-glucose = alpha-D-glucosyl-L-tyrosyl-[glycogenin] + UDP + H(+). It catalyses the reaction [1,4-alpha-D-glucosyl](n)-L-tyrosyl-[glycogenin] + UDP-alpha-D-glucose = [1,4-alpha-D-glucosyl](n+1)-L-tyrosyl-[glycogenin] + UDP + H(+). The protein operates within glycan biosynthesis; glycogen biosynthesis. In terms of biological role, glycogenin participates in the glycogen biosynthetic process along with glycogen synthase and glycogen branching enzyme. It catalyzes the formation of a short alpha (1,4)-glucosyl chain covalently attached via a glucose 1-O-tyrosyl linkage to internal tyrosine residues and these chains act as primers for the elongation reaction catalyzed by glycogen synthase. This is Glycogenin-1 from Mus musculus (Mouse).